The chain runs to 38 residues: Photosystem II reaction center protein X (38 aa).

A helical membrane pass occupies residues 8–28 (FLWSLVAGAVVLGALFGAIIF).

It belongs to the PsbX family. Type 1 subfamily. In terms of assembly, PSII is composed of 1 copy each of membrane proteins PsbA, PsbB, PsbC, PsbD, PsbE, PsbF, PsbH, PsbI, PsbJ, PsbK, PsbL, PsbM, PsbT, PsbX, PsbY, PsbZ, Psb30/Ycf12, peripheral proteins PsbO, CyanoQ (PsbQ), PsbU, PsbV and a large number of cofactors. It forms dimeric complexes.

The protein resides in the cellular thylakoid membrane. Functionally, involved in the binding and/or turnover of quinones at the Q(B) site of photosystem II (PSII). PSII is a light-driven water plastoquinone oxidoreductase, using light energy to abstract electrons from H(2)O, generating a proton gradient subsequently used for ATP formation. The polypeptide is Photosystem II reaction center protein X (Synechococcus sp. (strain JA-2-3B'a(2-13)) (Cyanobacteria bacterium Yellowstone B-Prime)).